Reading from the N-terminus, the 101-residue chain is U-scoloptoxin(10)-Sm2a (101 aa).

The first 23 residues, 1–23, serve as a signal peptide directing secretion; the sequence is MNKSMIILCAVLFLTYIIEENEA.

This sequence belongs to the scoloptoxin-10 family. Post-translationally, contains 3 disulfide bonds. As to expression, expressed by the venom gland.

Its subcellular location is the secreted. In Scolopendra morsitans (Tanzanian blue ringleg centipede), this protein is U-scoloptoxin(10)-Sm2a.